The primary structure comprises 200 residues: Large ribosomal subunit protein uL4 (200 aa).

A disordered region spans residues 42–65 (TRAQKTRSEVSGGGAKPWRQKGTG).

It belongs to the universal ribosomal protein uL4 family. As to quaternary structure, part of the 50S ribosomal subunit.

In terms of biological role, one of the primary rRNA binding proteins, this protein initially binds near the 5'-end of the 23S rRNA. It is important during the early stages of 50S assembly. It makes multiple contacts with different domains of the 23S rRNA in the assembled 50S subunit and ribosome. Forms part of the polypeptide exit tunnel. This chain is Large ribosomal subunit protein uL4, found in Vibrio atlanticus (strain LGP32) (Vibrio splendidus (strain Mel32)).